The following is a 463-amino-acid chain: Putative WAS protein family homolog 3 (463 aa).

Residues 1 to 54 form a required for WASH complex assembly region; the sequence is MTPVRMQHSLAGQTYAVPLIQPDLRREEAVQQMADALQYLQKVSGDIFSRISQQ. Residues 1–165 are WHD1; sequence MTPVRMQHSL…EGLGGLPSNI (165 aa). K218 is covalently cross-linked (Glycyl lysine isopeptide (Lys-Gly) (interchain with G-Cter in ubiquitin)). The tract at residues 295 to 463 is disordered; sequence QDGVLTPPPP…AEEDEDDWES (169 aa). The segment covering 300 to 312 has biased composition (pro residues); it reads TPPPPPPPPPPAP. Residues 347-463 form a VCA region; that stretch reads QGAPREVVDP…AEEDEDDWES (117 aa). A WH2 domain is found at 359-381; that stretch reads GRATLLESIRQAGGIGKAKLRSM. The span at 380-396 shows a compositional bias: basic and acidic residues; that stretch reads SMKERKLEKKQQKEQEQ. Over residues 422–434 the composition is skewed to gly residues; sequence SGKGPGAGEGPGG. Residues 454 to 463 show a composition bias toward acidic residues; sequence AEEDEDDWES.

This sequence belongs to the WASH1 family. Component of the WASH core complex also described as WASH regulatory complex (SHRC) composed of WASH (WASHC1, WASH2P or WASH3P), WASHC2 (WASHC2A or WASHC2C), WASHC3, WASHC4 and WASHC5. The WASH core complex associates with the F-actin-capping protein dimer (formed by CAPZA1, CAPZA2 or CAPZA3 and CAPZB) in a transient or substoichiometric manner which was initially described as WASH complex. Interacts (via WHD1 region) with WASHC2C; the interaction is direct. Interacts with alpha-tubulin. Interacts with BECN1; WASHC1 and AMBRA1 can competitively interact with BECN1. Interacts with BLOC1S2; may associate with the BLOC-1 complex. Interacts with tubulin gamma chain (TUBG1 or TUBG2). Interacts with EXOC1, EXOC4, EXOC8; in MMP14-positive endosomes in breast tumor cells; indicative for an association with the exocyst complex.

Its subcellular location is the early endosome. The protein resides in the early endosome membrane. It is found in the recycling endosome membrane. It localises to the cell projection. The protein localises to the lamellipodium. Its subcellular location is the filopodium. The protein resides in the cytoplasmic vesicle. It is found in the autophagosome. It localises to the cytoplasm. The protein localises to the cytoskeleton. Its subcellular location is the microtubule organizing center. The protein resides in the centrosome. It is found in the centriole. In terms of biological role, acts as a nucleation-promoting factor at the surface of endosomes, where it recruits and activates the Arp2/3 complex to induce actin polymerization, playing a key role in the fission of tubules that serve as transport intermediates during endosome sorting. Involved in endocytic trafficking of EGF. Involved in transferrin receptor recycling. Regulates the trafficking of endosomal alpha5beta1 integrin to the plasma membrane and involved in invasive cell migration. In T-cells involved in endosome-to-membrane recycling of receptors including T-cell receptor (TCR), CD28 and ITGAL; proposed to be implicated in T cell proliferation and effector function. In dendritic cells involved in endosome-to-membrane recycling of major histocompatibility complex (MHC) class II probably involving retromer and subsequently allowing antigen sampling, loading and presentation during T-cell activation. Involved in Arp2/3 complex-dependent actin assembly driving Salmonella typhimurium invasion independent of ruffling. Involved in the exocytosis of MMP14 leading to matrix remodeling during invasive migration and implicating late endosome-to-plasma membrane tubular connections and cooperation with the exocyst complex. Involved in negative regulation of autophagy independently from its role in endosomal sorting by inhibiting BECN1 ubiquitination to inactivate PIK3C3/Vps34 activity. This chain is Putative WAS protein family homolog 3 (WASH3P), found in Homo sapiens (Human).